A 155-amino-acid chain; its full sequence is Arginine repressor (155 aa).

It belongs to the ArgR family.

The protein localises to the cytoplasm. The protein operates within amino-acid biosynthesis; L-arginine biosynthesis [regulation]. Functionally, regulates arginine biosynthesis genes. This is Arginine repressor from Histophilus somni (strain 129Pt) (Haemophilus somnus).